A 714-amino-acid chain; its full sequence is Macrophage-expressed gene 1 protein (714 aa).

The signal sequence occupies residues Met1–Ala19. Positions Gly30 to Asn345 constitute an MACPF domain. Cys34 and Cys70 are disulfide-bonded. 2 consecutive transmembrane segments (beta stranded) span residues Phe113–Ser120 and Gly127–Glu132. An N-linked (GlcNAc...) asparagine glycan is attached at Asn185. The next 2 beta stranded transmembrane spans lie at Thr235–Phe244 and Val248–His256. N-linked (GlcNAc...) asparagine glycosylation occurs at Asn269. A disulfide bond links Cys350 and Cys369. N-linked (GlcNAc...) asparagine glycosylation is present at Asn375. 5 cysteine pairs are disulfide-bonded: Cys385–Cys394, Cys432–Cys446, Cys436–Cys442, Cys531–Cys569, and Cys554–Cys574. The tract at residues Pro410–Glu653 is P2. Residues Ala654–Tyr674 form a helical membrane-spanning segment. Residues Glu690 to Ala714 form a disordered region.

Belongs to the MPEG1 family. In terms of assembly, homooligomer; predominantly forms a homooligomeric arc-shaped pore complex instead of complete rings of 16 subunits. In terms of processing, proteolytically processed in two steps to generate the Macrophage-expressed gene 1 protein, processed form: cleaved by trypsin in proximity of the helical transmembrane domain releases the ectodomain into the lysosomal lumen to orient the pore-forming domain toward the endogenous membranes, and processed by the asparagine endopeptidase (LGMN). Proteolytic processing in antigen-containing vesicles is pH-dependent. Monoubiquitinated in response to bacterial infection; ubiquitination is required for vesicular localization and antibacterial activity and can be blocked by bacterial cell cycle inhibiting factor (cif).

It is found in the cytoplasmic vesicle membrane. The protein resides in the cytoplasmic vesicle. The protein localises to the phagosome membrane. With respect to regulation, forms arc- and ring-shaped pre-pores on top of the membrane at neutral to slightly acidic pH conditions and converts to pores upon acidification. Undergoes transition from the pre-pore to the pore in a processive clockwise hand-over-hand process. In the pore state, 2 alpha-helical regions refold into transmembrane hairpins (TMH1 and TMH2) in each protomer that form in the ensemble complex giant beta-barrel transmembrane pores. In terms of biological role, pore-forming protein involved in both innate and adaptive immunity. Plays a central role in antigen cross-presentation in dendritic cells by forming a pore in antigen-containing compartments, thereby promoting delivery of antigens for cross-presentation. Also involved in innate immune response following bacterial infection; shows antibacterial activity against a wide spectrum of Gram-positive, Gram-negative and acid-fast bacteria. Reduces the viability of the intracytosolic pathogen L.monocytogenes by inhibiting acidification of the phagocytic vacuole of host cells which restricts bacterial translocation from the vacuole to the cytosol. Required for the antibacterial activity of reactive oxygen species and nitric oxide. Its function is as follows. Pore-forming protein that plays a central role in antigen cross-presentation in dendritic cells by mediating delivery of antigens for cross-presentation. Dendritic cells bridge innate and adaptive immunity by capturing exogenous antigens on MHC class-I molecules and presenting them to naive CD8(+) T-cells. Acts by forming a pore in antigen-containing compartments, promoting the release of antigens into the cytosol, enabling generation of MHCI:peptide complexes and T-cell priming. The protein is Macrophage-expressed gene 1 protein (Mpeg1) of Rattus norvegicus (Rat).